Reading from the N-terminus, the 422-residue chain is Serine--tRNA ligase (422 aa).

L-serine is bound at residue T238 to E240. An ATP-binding site is contributed by R269 to E271. E292 contacts L-serine. E356–S359 provides a ligand contact to ATP. S390 contributes to the L-serine binding site.

It belongs to the class-II aminoacyl-tRNA synthetase family. Type-1 seryl-tRNA synthetase subfamily. In terms of assembly, homodimer. The tRNA molecule binds across the dimer.

Its subcellular location is the cytoplasm. It carries out the reaction tRNA(Ser) + L-serine + ATP = L-seryl-tRNA(Ser) + AMP + diphosphate + H(+). The enzyme catalyses tRNA(Sec) + L-serine + ATP = L-seryl-tRNA(Sec) + AMP + diphosphate + H(+). The protein operates within aminoacyl-tRNA biosynthesis; selenocysteinyl-tRNA(Sec) biosynthesis; L-seryl-tRNA(Sec) from L-serine and tRNA(Sec): step 1/1. Its function is as follows. Catalyzes the attachment of serine to tRNA(Ser). Is also able to aminoacylate tRNA(Sec) with serine, to form the misacylated tRNA L-seryl-tRNA(Sec), which will be further converted into selenocysteinyl-tRNA(Sec). The sequence is that of Serine--tRNA ligase from Helicobacter hepaticus (strain ATCC 51449 / 3B1).